A 335-amino-acid polypeptide reads, in one-letter code: Fructose-1,6-bisphosphatase class 1 (335 aa).

4 residues coordinate Mg(2+): Glu90, Asp113, Leu115, and Asp116. Residues 116–119 (DGSS), Asn209, Tyr242, and Lys272 contribute to the substrate site. Glu278 contacts Mg(2+).

The protein belongs to the FBPase class 1 family. In terms of assembly, homotetramer. Mg(2+) is required as a cofactor.

The protein resides in the cytoplasm. The catalysed reaction is beta-D-fructose 1,6-bisphosphate + H2O = beta-D-fructose 6-phosphate + phosphate. It functions in the pathway carbohydrate biosynthesis; gluconeogenesis. The protein is Fructose-1,6-bisphosphatase class 1 of Histophilus somni (strain 2336) (Haemophilus somnus).